We begin with the raw amino-acid sequence, 72 residues long: Translation initiation factor IF-1 (72 aa).

An S1-like domain is found at 1 to 72 (MSKQSSIEQD…TKGRIVFRYK (72 aa)).

It belongs to the IF-1 family. As to quaternary structure, component of the 30S ribosomal translation pre-initiation complex which assembles on the 30S ribosome in the order IF-2 and IF-3, IF-1 and N-formylmethionyl-tRNA(fMet); mRNA recruitment can occur at any time during PIC assembly.

It is found in the cytoplasm. Its function is as follows. One of the essential components for the initiation of protein synthesis. Stabilizes the binding of IF-2 and IF-3 on the 30S subunit to which N-formylmethionyl-tRNA(fMet) subsequently binds. Helps modulate mRNA selection, yielding the 30S pre-initiation complex (PIC). Upon addition of the 50S ribosomal subunit IF-1, IF-2 and IF-3 are released leaving the mature 70S translation initiation complex. This is Translation initiation factor IF-1 from Cytophaga hutchinsonii (strain ATCC 33406 / DSM 1761 / CIP 103989 / NBRC 15051 / NCIMB 9469 / D465).